The primary structure comprises 196 residues: dTTP/UTP pyrophosphatase (196 aa).

D78 functions as the Proton acceptor in the catalytic mechanism.

This sequence belongs to the Maf family. YhdE subfamily. A divalent metal cation is required as a cofactor.

The protein localises to the cytoplasm. It catalyses the reaction dTTP + H2O = dTMP + diphosphate + H(+). The catalysed reaction is UTP + H2O = UMP + diphosphate + H(+). Its function is as follows. Nucleoside triphosphate pyrophosphatase that hydrolyzes dTTP and UTP. May have a dual role in cell division arrest and in preventing the incorporation of modified nucleotides into cellular nucleic acids. This Photobacterium profundum (strain SS9) protein is dTTP/UTP pyrophosphatase.